The following is a 148-amino-acid chain: Ubiquitin-conjugating enzyme E2 8 (148 aa).

A UBC core domain is found at 1–147 (MASKRILKEL…ARNWTQKYAM (147 aa)). Residue Cys-85 is the Glycyl thioester intermediate of the active site.

This sequence belongs to the ubiquitin-conjugating enzyme family. In terms of assembly, interacts with CIP8, CHIP, NLA and XERICO. As to expression, highest expression in young stems, old leaves. Lowest levels in floral buds, anthers and young leaves.

It catalyses the reaction S-ubiquitinyl-[E1 ubiquitin-activating enzyme]-L-cysteine + [E2 ubiquitin-conjugating enzyme]-L-cysteine = [E1 ubiquitin-activating enzyme]-L-cysteine + S-ubiquitinyl-[E2 ubiquitin-conjugating enzyme]-L-cysteine.. It functions in the pathway protein modification; protein ubiquitination. Functionally, accepts the ubiquitin from the E1 complex and catalyzes its covalent attachment to other proteins. Mediates the selective degradation of short-lived and abnormal proteins. This is Ubiquitin-conjugating enzyme E2 8 (UBC8) from Arabidopsis thaliana (Mouse-ear cress).